We begin with the raw amino-acid sequence, 564 residues long: Eukaryotic translation initiation factor 3 subunit L (564 aa).

In terms of domain architecture, PCI spans 331–537; it reads DAIRVFANIL…IHIADTKVAR (207 aa).

It belongs to the eIF-3 subunit L family. As to quaternary structure, component of the eukaryotic translation initiation factor 3 (eIF-3) complex, which is composed of 13 subunits: EIF3A, EIF3B, EIF3C, EIF3D, EIF3E, EIF3F, EIF3G, EIF3H, EIF3I, EIF3J, EIF3K, EIF3L and EIF3M.

It is found in the cytoplasm. Functionally, component of the eukaryotic translation initiation factor 3 (eIF-3) complex, which is involved in protein synthesis of a specialized repertoire of mRNAs and, together with other initiation factors, stimulates binding of mRNA and methionyl-tRNAi to the 40S ribosome. The eIF-3 complex specifically targets and initiates translation of a subset of mRNAs involved in cell proliferation. The polypeptide is Eukaryotic translation initiation factor 3 subunit L (Gallus gallus (Chicken)).